The primary structure comprises 213 residues: Golgi to ER traffic protein 1 (213 aa).

At 1-4 (MESW) the chain is on the lumenal side. The helical transmembrane segment at 5-25 (LLVILAFLVLERLWPLIDSLI) threads the bilayer. At 26 to 98 (QRFAQANSTK…RTKASLKKVK (73 aa)) the chain is on the cytoplasmic side. A coiled-coil region spans residues 55-99 (AQDQYVKWTKNNRTLEKINKQIEEEKKQLLSQVDRTKASLKKVKL). The helical transmembrane segment at 99–119 (LVLITVPFTILKFYKGKMPIY) threads the bilayer. Topologically, residues 120-158 (DLPKGLFPNYLQGLFQHGWVYLALGPLNIKKVGDGTHVT) are lumenal. The helical transmembrane segment at 159 to 175 (VSLAIWLFALLKVVSTL) threads the bilayer. Residues 176 to 213 (GNIWESLTAPAIPAPTITTDPIDQTNESEKPPVDQPVD) are Cytoplasmic-facing. Residues 193-213 (TTDPIDQTNESEKPPVDQPVD) form a disordered region.

The protein belongs to the WRB/GET1 family. As to quaternary structure, component of the Golgi to ER traffic (GET) complex, which is composed of GET1, GET2 and GET3. Within the complex, GET1 and GET2 form a heterotetramer which is stabilized by phosphatidylinositol binding and which binds to the GET3 homodimer.

Its subcellular location is the endoplasmic reticulum membrane. It localises to the golgi apparatus membrane. Functionally, required for the post-translational delivery of tail-anchored (TA) proteins to the endoplasmic reticulum. Together with GET2, acts as a membrane receptor for soluble GET3, which recognizes and selectively binds the transmembrane domain of TA proteins in the cytosol. The GET complex cooperates with the HDEL receptor ERD2 to mediate the ATP-dependent retrieval of resident ER proteins that contain a C-terminal H-D-E-L retention signal from the Golgi to the ER. In Kluyveromyces lactis (strain ATCC 8585 / CBS 2359 / DSM 70799 / NBRC 1267 / NRRL Y-1140 / WM37) (Yeast), this protein is Golgi to ER traffic protein 1.